The primary structure comprises 229 residues: Uracil-DNA glycosylase (229 aa).

Catalysis depends on Asp-65, which acts as the Proton acceptor.

It belongs to the uracil-DNA glycosylase (UDG) superfamily. UNG family.

It is found in the cytoplasm. It carries out the reaction Hydrolyzes single-stranded DNA or mismatched double-stranded DNA and polynucleotides, releasing free uracil.. Functionally, excises uracil residues from the DNA which can arise as a result of misincorporation of dUMP residues by DNA polymerase or due to deamination of cytosine. The chain is Uracil-DNA glycosylase from Limosilactobacillus fermentum (strain NBRC 3956 / LMG 18251) (Lactobacillus fermentum).